We begin with the raw amino-acid sequence, 292 residues long: Tetrahydromethanopterin:alpha-L-glutamate ligase (292 aa).

An ATP-grasp domain is found at 103 to 286; it reads SFLMEVHKIP…IAQNLIDEAL (184 aa). ATP-binding positions include K138, 176–188, and R204; that span reads QEFV…VYRD. Mg(2+) contacts are provided by D247, E259, and N261. Positions 247, 259, and 261 each coordinate Mn(2+).

It belongs to the RimK family. MptN subfamily. Homodimer. The cofactor is Mg(2+). Requires Mn(2+) as cofactor.

It catalyses the reaction 5,6,7,8-tetrahydromethanopterin + L-glutamate + ATP = 5,6,7,8-tetrahydrosarcinapterin + ADP + phosphate + H(+). It participates in cofactor biosynthesis; 5,6,7,8-tetrahydrosarcinapterin biosynthesis. Functionally, catalyzes the ATP or GTP-dependent addition of one L-glutamate molecule to tetrahydromethanopterin, producing tetrahydrosarcinapterin. In Methanococcus maripaludis (strain DSM 14266 / JCM 13030 / NBRC 101832 / S2 / LL), this protein is Tetrahydromethanopterin:alpha-L-glutamate ligase (mptN).